The chain runs to 562 residues: Protein wntless (562 aa).

Residues 1–13 (MSGTILENLSGRK) are Cytoplasmic-facing. Residues 14-34 (LSILVGSLLLCQVLCFLLGGL) form a helical membrane-spanning segment. Residues 35 to 239 (YAPVPAGHTN…AIHQNGGFTH (205 aa)) are Lumenal-facing. N58 carries N-linked (GlcNAc...) asparagine glycosylation. The helical transmembrane segment at 240–260 (VWLMLKTLLFPFVVGIMVWFW) threads the bilayer. Over 261-270 (RRVHLLQRSP) the chain is Cytoplasmic. The chain crosses the membrane as a helical span at residues 271 to 291 (ALLEYMLLYLGGALTFLNLPL). At 292 to 311 (EYLSLTIEMPYMLLLSDIRQ) the chain is on the lumenal side. The chain crosses the membrane as a helical span at residues 312–332 (GIFYAMLLSFWLVFAGEHMLI). At 333–344 (QDSSNKSTIRSR) the chain is on the cytoplasmic side. Residues 345–365 (YWKHLSAVVVGCISLFVFDIS) traverse the membrane as a helical segment. The Lumenal segment spans residues 366 to 386 (ERGVQLRNPFYSIWTTPLGAK). The chain crosses the membrane as a helical span at residues 387–407 (VAMSFILLAGVSAAVYFLFLC). The Cytoplasmic portion of the chain corresponds to 408–441 (YMISKVFKNIGDKRTSLPSMSQARRLHYEGLIYR). A helical transmembrane segment spans residues 442-462 (FKFLMLATLLCAALTVTGFIM). Residues 463–482 (GQMAEGQWKWNDDVEIQLTS) lie on the Lumenal side of the membrane. Residues 483–503 (AFLTGVYGMWNIYIFALLILY) traverse the membrane as a helical segment. The Cytoplasmic portion of the chain corresponds to 504–562 (APSHKQWPTMHHSDETTQSNENIVASAASEEIEFSNLPSDSNPSEISSLTSFTRKVAFE). The segment at 538 to 562 (SNLPSDSNPSEISSLTSFTRKVAFE) is disordered. Polar residues predominate over residues 539–556 (NLPSDSNPSEISSLTSFT).

This sequence belongs to the wntless family. Interacts with wg; in the Golgi. Interacts with Vps35, a component of the retromer complex; wls stability is regulated by Vps35.

It is found in the presynaptic cell membrane. The protein resides in the postsynaptic cell membrane. Its subcellular location is the cell membrane. The protein localises to the endoplasmic reticulum membrane. It localises to the endosome membrane. It is found in the golgi apparatus membrane. In terms of biological role, a segment polarity gene required for wingless (wg)-dependent patterning processes, acting in both wg-sending cells and wg-target cells. In non-neuronal cells wls directs wg secretion. The wls traffic loop encompasses the Golgi, the cell surface, an endocytic compartment and a retrograde route leading back to the Golgi, and involves clathrin-mediated endocytosis and the retromer complex (a conserved protein complex consisting of Vps35 and Vps26). In neuronal cells (the larval motorneuron NMJ), the wg signal moves across the synapse via the release of wls-containing exosome-like vesicles. Postsynaptic wls is required for the trafficking of fz2 through the fz2-interacting protein Grip. The polypeptide is Protein wntless (Drosophila pseudoobscura pseudoobscura (Fruit fly)).